The following is a 169-amino-acid chain: NADH-quinone oxidoreductase subunit B (169 aa).

Residues Cys-42, Cys-43, Cys-107, and Cys-136 each coordinate [4Fe-4S] cluster.

The protein belongs to the complex I 20 kDa subunit family. As to quaternary structure, NDH-1 is composed of 14 different subunits. Subunits NuoB, C, D, E, F, and G constitute the peripheral sector of the complex. Requires [4Fe-4S] cluster as cofactor.

The protein localises to the cell inner membrane. The enzyme catalyses a quinone + NADH + 5 H(+)(in) = a quinol + NAD(+) + 4 H(+)(out). Functionally, NDH-1 shuttles electrons from NADH, via FMN and iron-sulfur (Fe-S) centers, to quinones in the respiratory chain. Couples the redox reaction to proton translocation (for every two electrons transferred, four hydrogen ions are translocated across the cytoplasmic membrane), and thus conserves the redox energy in a proton gradient. The sequence is that of NADH-quinone oxidoreductase subunit B from Campylobacter hominis (strain ATCC BAA-381 / DSM 21671 / CCUG 45161 / LMG 19568 / NCTC 13146 / CH001A).